Here is a 231-residue protein sequence, read N- to C-terminus: Urease subunit gamma/beta (231 aa).

Positions 1-101 are urease gamma; it reads MLLTPTELER…LVTVHQPIRP (101 aa). The segment at 102-231 is urease beta; that stretch reads GQLPLAVMPT…RARAQFFKGA (130 aa).

In the N-terminal section; belongs to the urease gamma subunit family. This sequence in the C-terminal section; belongs to the urease beta subunit family. As to quaternary structure, heterohexamer of 3 UreC (alpha) and 3 UreAB (gamma/beta) subunits.

The protein resides in the cytoplasm. The catalysed reaction is urea + 2 H2O + H(+) = hydrogencarbonate + 2 NH4(+). It participates in nitrogen metabolism; urea degradation; CO(2) and NH(3) from urea (urease route): step 1/1. This chain is Urease subunit gamma/beta, found in Pseudomonas syringae pv. syringae (strain B728a).